Here is a 254-residue protein sequence, read N- to C-terminus: 5'-methylthioadenosine/S-adenosylhomocysteine nucleosidase (254 aa).

At M1 the chain carries N-acetylmethionine. E25 (proton acceptor) is an active-site residue. S-methyl-5'-thioadenosine contacts are provided by residues T103 and K186–E189. Residues K186 and D212 each contribute to the adenine site. Residue D212 is the Proton donor of the active site.

Belongs to the PNP/UDP phosphorylase family. MtnN subfamily. In terms of assembly, homodimer.

It carries out the reaction S-methyl-5'-thioadenosine + H2O = 5-(methylsulfanyl)-D-ribose + adenine. It catalyses the reaction S-adenosyl-L-homocysteine + H2O = S-(5-deoxy-D-ribos-5-yl)-L-homocysteine + adenine. The enzyme catalyses 5'-deoxyadenosine + H2O = 5-deoxy-D-ribose + adenine. Its pathway is amino-acid biosynthesis; L-methionine biosynthesis via salvage pathway; S-methyl-5-thio-alpha-D-ribose 1-phosphate from S-methyl-5'-thioadenosine (hydrolase route): step 1/2. Functionally, enzyme of the methionine cycle that catalyzes the irreversible cleavage of the glycosidic bond in 5'-methylthioadenosine (MTA) and S-adenosylhomocysteine (SAH/AdoHcy) to a lesser extent, to adenine and the corresponding thioribose, 5'-methylthioribose and S-ribosylhomocysteine, respectively. Contributes to the maintenance of AdoMet homeostasis and is required to sustain high rates of ethylene synthesis. In Arabidopsis thaliana (Mouse-ear cress), this protein is 5'-methylthioadenosine/S-adenosylhomocysteine nucleosidase (MTN2).